The following is a 626-amino-acid chain: 5'-AMP-activated protein kinase catalytic subunit alpha-2 (626 aa).

Basic and acidic residues predominate over residues 1 to 24; that stretch reads MFSHQDRDRDRKEDGGGDGTEMKS. Residues 1–77 form a disordered region; sequence MFSHQDRDRD…GETSTKQQQE (77 aa). Over residues 38-49 the composition is skewed to basic residues; sequence NLSRKLSAKSRK. The span at 58–77 shows a compositional bias: polar residues; sequence DNSSKMSSPGGETSTKQQQE. Residues 87–339 enclose the Protein kinase domain; that stretch reads YILKETLGVG…IKDVIAHEWF (253 aa). Residues 93-101 and Lys-116 contribute to the ATP site; that span reads LGVGTFGKV. The active-site Proton acceptor is the Asp-210. Position 243 is a phosphothreonine; by par-4 (Thr-243). Residues 541 to 568 form a disordered region; that stretch reads SGSASASSSRHASMSMPQKPAGIRGTRT. A compositionally biased stretch (low complexity) spans 542–555; it reads GSASASSSRHASMS.

This sequence belongs to the protein kinase superfamily. CAMK Ser/Thr protein kinase family. SNF1 subfamily. As to quaternary structure, tetramer, composed of 2 regulatory (R) and 2 catalytic (C) subunits. In the presence of cAMP it dissociates into 2 active monomeric C subunits and an R dimer that binds four cAMP molecules. Post-translationally, phosphorylated on Thr-243 in response to oxidative stress and during dauer development. Phosphorylation at Thr-243 is increased in response to sodium azide or the AMP analog AICAR (5-amino-1-(5-phospho-beta-D-ribosyl)imidazole-4-carboxamide). In terms of tissue distribution, expressed in the pharynx, the ventral cord, neurons including the hermaphrodite-specific neuron, body wall muscles, the vulva, the excretory canal, and weakly in the intestine.

The enzyme catalyses L-seryl-[protein] + ATP = O-phospho-L-seryl-[protein] + ADP + H(+). It catalyses the reaction L-threonyl-[protein] + ATP = O-phospho-L-threonyl-[protein] + ADP + H(+). With respect to regulation, activated by phosphorylation. Functionally, acts as a sensor that couples lifespan to information about energy levels and insulin-like signals. Role in motility and response to oxidative stress. Involved in the establishment of germline stem cell (GSC) quiescence during dauer development. Plays a role in axon regrowth after axotomy in PLM neurons. Plays a role in the maintenance of glycogen stores which are necessary for resistance to hyperosmotic stress. Plays a role in the regulation of flp-7 secretion from ASI neurons. Keeps the CREB-regulated transcription coactivator 1 homolog crtc-1 inactive which in turn inhibits flp-7 secretion. Following serotonin signaling, derepresses crtc-1 which stimulates flp-7 secretion and subsequent body fat loss. This Caenorhabditis elegans protein is 5'-AMP-activated protein kinase catalytic subunit alpha-2.